The chain runs to 93 residues: Small ribosomal subunit protein uS19 (93 aa).

Belongs to the universal ribosomal protein uS19 family.

In terms of biological role, protein S19 forms a complex with S13 that binds strongly to the 16S ribosomal RNA. The polypeptide is Small ribosomal subunit protein uS19 (Alkaliphilus metalliredigens (strain QYMF)).